The chain runs to 395 residues: Syncephapepsin (395 aa).

The signal sequence occupies residues 1-19 (MKFSLALLATVALATISQA). The propeptide at 20-71 (APVEKQVAGKPFQLVKNPHYQANATRAIFRAEKKYARHTAIPEQGKTIVKSA) is activation peptide. The Peptidase A1 domain occupies 89–391 (YYATVSVGTP…NQGVPEVQIA (303 aa)). The active site involves aspartate 107. Cysteine 120 and cysteine 123 are disulfide-bonded. Aspartate 288 is a catalytic residue. Cysteine 322 and cysteine 355 are oxidised to a cystine.

The protein belongs to the peptidase A1 family. Monomer.

Hydrolysis of proteins with a broad specificity. Residues recognized to be cleaved were primarily those of trypsin and chymotrypsin and Lys was the most susceptible. The chain is Syncephapepsin (SPSR) from Syncephalastrum racemosum (Filamentous fungus).